The primary structure comprises 445 residues: UDP-N-acetylmuramoylalanine--D-glutamate ligase (445 aa).

118-124 (GTNGKTT) provides a ligand contact to ATP.

The protein belongs to the MurCDEF family.

It is found in the cytoplasm. It carries out the reaction UDP-N-acetyl-alpha-D-muramoyl-L-alanine + D-glutamate + ATP = UDP-N-acetyl-alpha-D-muramoyl-L-alanyl-D-glutamate + ADP + phosphate + H(+). It participates in cell wall biogenesis; peptidoglycan biosynthesis. In terms of biological role, cell wall formation. Catalyzes the addition of glutamate to the nucleotide precursor UDP-N-acetylmuramoyl-L-alanine (UMA). This chain is UDP-N-acetylmuramoylalanine--D-glutamate ligase, found in Macrococcus caseolyticus (strain JCSC5402) (Macrococcoides caseolyticum).